The primary structure comprises 252 residues: Chitooligosaccharide deacetylase (252 aa).

Residue His125 coordinates Mg(2+).

This sequence belongs to the YdjC deacetylase family. ChbG subfamily. As to quaternary structure, homodimer. Mg(2+) serves as cofactor.

The protein resides in the cytoplasm. The catalysed reaction is N,N'-diacetylchitobiose + H2O = N-acetyl-beta-D-glucosaminyl-(1-&gt;4)-D-glucosamine + acetate. The enzyme catalyses diacetylchitobiose-6'-phosphate + H2O = N'-monoacetylchitobiose-6'-phosphate + acetate. Its pathway is glycan degradation; chitin degradation. Functionally, involved in the degradation of chitin. ChbG is essential for growth on the acetylated chitooligosaccharides chitobiose and chitotriose but is dispensable for growth on cellobiose and chitosan dimer, the deacetylated form of chitobiose. Deacetylation of chitobiose-6-P and chitotriose-6-P is necessary for both the activation of the chb promoter by the regulatory protein ChbR and the hydrolysis of phosphorylated beta-glucosides by the phospho-beta-glucosidase ChbF. Catalyzes the removal of only one acetyl group from chitobiose-6-P to yield monoacetylchitobiose-6-P, the inducer of ChbR and the substrate of ChbF. This is Chitooligosaccharide deacetylase from Escherichia coli O157:H7.